The following is a 432-amino-acid chain: Amino-acid acetyltransferase (432 aa).

Residues 286–425 form the N-acetyltransferase domain; it reads ELVREAAIED…ASLYNYQRNS (140 aa).

This sequence belongs to the acetyltransferase family. ArgA subfamily.

The protein localises to the cytoplasm. The catalysed reaction is L-glutamate + acetyl-CoA = N-acetyl-L-glutamate + CoA + H(+). Its pathway is amino-acid biosynthesis; L-arginine biosynthesis; N(2)-acetyl-L-ornithine from L-glutamate: step 1/4. The sequence is that of Amino-acid acetyltransferase from Pseudomonas fluorescens (strain Pf0-1).